Here is a 661-residue protein sequence, read N- to C-terminus: UvrABC system protein B (661 aa).

Positions 23–180 constitute a Helicase ATP-binding domain; the sequence is EGLQKGYRIQ…THLARIGYER (158 aa). 36–43 is an ATP binding site; the sequence is GVTGSGKT. The Beta-hairpin signature appears at 89–112; sequence YYDYYQPEAYIPTRDLYIEKNADI. The 167-residue stretch at 426-592 folds into the Helicase C-terminal domain; that stretch reads QIDDLVNEIA…TIIKPLDEEI (167 aa). Residues 620–655 enclose the UVR domain; sequence EEYIALLEEEMYKAASELRYEDAARLRDELFNIREK.

The protein belongs to the UvrB family. As to quaternary structure, forms a heterotetramer with UvrA during the search for lesions. Interacts with UvrC in an incision complex.

It is found in the cytoplasm. Functionally, the UvrABC repair system catalyzes the recognition and processing of DNA lesions. A damage recognition complex composed of 2 UvrA and 2 UvrB subunits scans DNA for abnormalities. Upon binding of the UvrA(2)B(2) complex to a putative damaged site, the DNA wraps around one UvrB monomer. DNA wrap is dependent on ATP binding by UvrB and probably causes local melting of the DNA helix, facilitating insertion of UvrB beta-hairpin between the DNA strands. Then UvrB probes one DNA strand for the presence of a lesion. If a lesion is found the UvrA subunits dissociate and the UvrB-DNA preincision complex is formed. This complex is subsequently bound by UvrC and the second UvrB is released. If no lesion is found, the DNA wraps around the other UvrB subunit that will check the other stand for damage. The polypeptide is UvrABC system protein B (Thermosipho africanus (strain TCF52B)).